Reading from the N-terminus, the 242-residue chain is Probable transcriptional regulatory protein Cthe_2075 (242 aa).

It belongs to the TACO1 family.

The protein resides in the cytoplasm. The protein is Probable transcriptional regulatory protein Cthe_2075 of Acetivibrio thermocellus (strain ATCC 27405 / DSM 1237 / JCM 9322 / NBRC 103400 / NCIMB 10682 / NRRL B-4536 / VPI 7372) (Clostridium thermocellum).